Consider the following 256-residue polypeptide: Small ribosomal subunit protein eS1 (256 aa).

A2 bears the N-acetylalanine; partial mark.

The protein belongs to the eukaryotic ribosomal protein eS1 family. As to quaternary structure, component of the small ribosomal subunit. Mature ribosomes consist of a small (40S) and a large (60S) subunit. The 40S subunit contains about 33 different proteins and 1 molecule of RNA (18S). The 60S subunit contains about 49 different proteins and 3 molecules of RNA (25S, 5.8S and 5S).

It localises to the cytoplasm. This Laccaria bicolor (strain S238N-H82 / ATCC MYA-4686) (Bicoloured deceiver) protein is Small ribosomal subunit protein eS1.